The sequence spans 378 residues: Manganese peroxidase 1 (378 aa).

The signal sequence occupies residues 1–21 (MAFKSLIAFVALAAAVRAAPT). Intrachain disulfides connect cysteine 24-cysteine 36, cysteine 35-cysteine 310, cysteine 54-cysteine 138, cysteine 274-cysteine 340, and cysteine 362-cysteine 369. Mn(2+)-binding residues include glutamate 56 and glutamate 60. Histidine 67 (proton acceptor) is an active-site residue. 4 residues coordinate Ca(2+): aspartate 68, glycine 83, aspartate 85, and serine 87. N-linked (GlcNAc...) asparagine glycosylation is found at asparagine 97 and asparagine 152. Histidine 194 is a binding site for heme b. Serine 195 contributes to the Ca(2+) binding site. Aspartate 200 serves as a coordination point for Mn(2+). Ca(2+) is bound by residues aspartate 212, threonine 214, threonine 217, and aspartate 219. N-linked (GlcNAc...) asparagine glycosylation is present at asparagine 238.

This sequence belongs to the peroxidase family. Ligninase subfamily. Requires Ca(2+) as cofactor. Heme b is required as a cofactor.

It localises to the secreted. It catalyses the reaction 2 Mn(2+) + H2O2 + 2 H(+) = 2 Mn(3+) + 2 H2O. Functionally, catalyzes the oxidation of Mn(2+) to Mn(3+). The latter, acting as a diffusible redox mediator, is capable of oxidizing a variety of lignin compounds. The chain is Manganese peroxidase 1 (MNP1) from Phanerodontia chrysosporium (White-rot fungus).